We begin with the raw amino-acid sequence, 365 residues long: UDP-N-acetylglucosamine--N-acetylmuramyl-(pentapeptide) pyrophosphoryl-undecaprenol N-acetylglucosamine transferase (365 aa).

UDP-N-acetyl-alpha-D-glucosamine-binding positions include 17–19 (TGG), Asn129, Arg167, Ser194, Ile250, 269–274 (ALTVSE), and Gln295.

Belongs to the glycosyltransferase 28 family. MurG subfamily.

It is found in the cell inner membrane. The catalysed reaction is di-trans,octa-cis-undecaprenyl diphospho-N-acetyl-alpha-D-muramoyl-L-alanyl-D-glutamyl-meso-2,6-diaminopimeloyl-D-alanyl-D-alanine + UDP-N-acetyl-alpha-D-glucosamine = di-trans,octa-cis-undecaprenyl diphospho-[N-acetyl-alpha-D-glucosaminyl-(1-&gt;4)]-N-acetyl-alpha-D-muramoyl-L-alanyl-D-glutamyl-meso-2,6-diaminopimeloyl-D-alanyl-D-alanine + UDP + H(+). It participates in cell wall biogenesis; peptidoglycan biosynthesis. In terms of biological role, cell wall formation. Catalyzes the transfer of a GlcNAc subunit on undecaprenyl-pyrophosphoryl-MurNAc-pentapeptide (lipid intermediate I) to form undecaprenyl-pyrophosphoryl-MurNAc-(pentapeptide)GlcNAc (lipid intermediate II). This is UDP-N-acetylglucosamine--N-acetylmuramyl-(pentapeptide) pyrophosphoryl-undecaprenol N-acetylglucosamine transferase from Shewanella violacea (strain JCM 10179 / CIP 106290 / LMG 19151 / DSS12).